Here is a 243-residue protein sequence, read N- to C-terminus: Segregation and condensation protein A (243 aa).

The protein belongs to the ScpA family. As to quaternary structure, component of a cohesin-like complex composed of ScpA, ScpB and the Smc homodimer, in which ScpA and ScpB bind to the head domain of Smc. The presence of the three proteins is required for the association of the complex with DNA.

The protein resides in the cytoplasm. Functionally, participates in chromosomal partition during cell division. May act via the formation of a condensin-like complex containing Smc and ScpB that pull DNA away from mid-cell into both cell halves. The polypeptide is Segregation and condensation protein A (Thermoanaerobacter pseudethanolicus (strain ATCC 33223 / 39E) (Clostridium thermohydrosulfuricum)).